Here is a 122-residue protein sequence, read N- to C-terminus: Large ribosomal subunit protein uL14 (122 aa).

The protein belongs to the universal ribosomal protein uL14 family. Part of the 50S ribosomal subunit. Forms a cluster with proteins L3 and L19. In the 70S ribosome, L14 and L19 interact and together make contacts with the 16S rRNA in bridges B5 and B8.

In terms of biological role, binds to 23S rRNA. Forms part of two intersubunit bridges in the 70S ribosome. This Brachyspira hyodysenteriae (strain ATCC 49526 / WA1) protein is Large ribosomal subunit protein uL14.